The following is a 470-amino-acid chain: 6-phosphofructo-2-kinase/fructose-2,6-bisphosphatase (470 aa).

The interval 1-249 (MAAVASGQLT…VYYLMNTHVT (249 aa)) is 6-phosphofructo-2-kinase. A Phosphoserine; by PKA modification is found at Ser-31. Position 47–55 (47–55 (GLRRPGKTY)) interacts with ATP. Beta-D-fructose 6-phosphate is bound by residues Arg-80 and Arg-104. Residue Asp-130 is part of the active site. The beta-D-fructose 6-phosphate site is built by Thr-132 and Arg-138. The active site involves Cys-160. 169-174 (NIKQVK) provides a ligand contact to ATP. Beta-D-fructose 6-phosphate contacts are provided by Lys-174, Arg-195, and Tyr-199. Residues 250-469 (PRAIYLSRHG…AEALVTVPEH (220 aa)) are fructose-2,6-bisphosphatase. A beta-D-fructose 2,6-bisphosphate-binding site is contributed by Arg-257. His-258 serves as the catalytic Tele-phosphohistidine intermediate. 2 residues coordinate beta-D-fructose 2,6-bisphosphate: Asn-264 and Gly-270. Glu-327 (proton donor/acceptor) is an active-site residue. The beta-D-fructose 2,6-bisphosphate site is built by Tyr-338, Arg-352, Lys-356, Tyr-367, Gln-393, and Arg-397. 349–352 (FALR) contributes to the ATP binding site. ATP is bound by residues 393-397 (QAVMR) and Tyr-429.

This sequence in the C-terminal section; belongs to the phosphoglycerate mutase family. In terms of assembly, homodimer. In terms of tissue distribution, liver.

The enzyme catalyses beta-D-fructose 2,6-bisphosphate + H2O = beta-D-fructose 6-phosphate + phosphate. It catalyses the reaction beta-D-fructose 6-phosphate + ATP = beta-D-fructose 2,6-bisphosphate + ADP + H(+). Its activity is regulated as follows. Phosphorylation results in inhibition of the kinase activity. Functionally, synthesis and degradation of fructose 2,6-bisphosphate. The protein is 6-phosphofructo-2-kinase/fructose-2,6-bisphosphatase of Gallus gallus (Chicken).